Here is a 71-residue protein sequence, read N- to C-terminus: Large ribosomal subunit protein bL31 (71 aa).

Zn(2+) is bound by residues Cys-16, Cys-18, Cys-37, and Cys-40.

Belongs to the bacterial ribosomal protein bL31 family. Type A subfamily. As to quaternary structure, part of the 50S ribosomal subunit. Zn(2+) is required as a cofactor.

Its function is as follows. Binds the 23S rRNA. This Nitratidesulfovibrio vulgaris (strain ATCC 29579 / DSM 644 / CCUG 34227 / NCIMB 8303 / VKM B-1760 / Hildenborough) (Desulfovibrio vulgaris) protein is Large ribosomal subunit protein bL31.